The primary structure comprises 184 residues: Probable chemoreceptor glutamine deamidase CheD (184 aa).

The protein belongs to the CheD family.

It catalyses the reaction L-glutaminyl-[protein] + H2O = L-glutamyl-[protein] + NH4(+). In terms of biological role, probably deamidates glutamine residues to glutamate on methyl-accepting chemotaxis receptors (MCPs), playing an important role in chemotaxis. The sequence is that of Probable chemoreceptor glutamine deamidase CheD from Rhizobium rhizogenes (strain K84 / ATCC BAA-868) (Agrobacterium radiobacter).